The following is a 700-amino-acid chain: Putative glutamine-dependent NAD(+) synthetase (700 aa).

The CN hydrolase domain maps to 5 to 275 (VTIASCQLNQ…VEVISATVDV (271 aa)). Residue Glu45 is the Proton acceptor; for glutaminase activity of the active site. The active-site For glutaminase activity is Lys114. The Nucleophile; for glutaminase activity role is filled by Cys175. The ligase stretch occupies residues 327 to 700 (IPLPEEEITF…ASKFEQHQRK (374 aa)). 357-364 (PLSGGLDS) is a binding site for ATP. Ser359 is a catalytic residue.

This sequence in the C-terminal section; belongs to the NAD synthetase family.

It carries out the reaction deamido-NAD(+) + L-glutamine + ATP + H2O = L-glutamate + AMP + diphosphate + NAD(+) + H(+). The protein operates within cofactor biosynthesis; NAD(+) biosynthesis; NAD(+) from deamido-NAD(+) (L-Gln route): step 1/1. The protein is Putative glutamine-dependent NAD(+) synthetase of Schizosaccharomyces pombe (strain 972 / ATCC 24843) (Fission yeast).